A 464-amino-acid chain; its full sequence is MFRQEQRWPRQLWPMGSLQPDSGNASWNGTEGPGGGTRATPYSLQVTVTLVCLVGLLILLTVFGNVLVIIAVFTSRALKAPQNLFLVSLASADILVATLVIPFSLANEVMGYWYFGKAWCEIYLALDVLFCTSSIVHLCAISLDRYWSITQAIEYNLKRTPRRIKAIIVTVWVISAVISFPPLISFEKAGGGGQQPAEPRCEINDQKWYVISSSIGSFFAPCLIMILVYVRIYQIAKRRTRVPPSRRGPDAHAAAPPGGAERRPNGLGLERGVGPGGAEAEPLPTQVNGAPGEPAPAGPRDAEALDLEESSSSEHAERPPGARRPERGLRAKSKARASQVKPGDSLPRRAPGAAGSGTSGSGPGEERGGGAKASRWRGRQNREKRFTFVLAVVIGVFVVCWFPFFFTYTLTAVGCSVPRTLFKFFFWFGYCNSSLNPVIYTIFNHDFRRAFKKILCRGDRKRIV.

The Extracellular portion of the chain corresponds to 1–47; that stretch reads MFRQEQRWPRQLWPMGSLQPDSGNASWNGTEGPGGGTRATPYSLQVT. Residues 13–34 are disordered; the sequence is WPMGSLQPDSGNASWNGTEGPG. A compositionally biased stretch (polar residues) spans 19-29; it reads QPDSGNASWNG. N-linked (GlcNAc...) asparagine glycosylation is found at Asn-24 and Asn-28. Residues 48–73 form a helical membrane-spanning segment; sequence VTLVCLVGLLILLTVFGNVLVIIAVF. Topologically, residues 74 to 84 are cytoplasmic; that stretch reads TSRALKAPQNL. A helical transmembrane segment spans residues 85–110; that stretch reads FLVSLASADILVATLVIPFSLANEVM. The Extracellular segment spans residues 111–120; that stretch reads GYWYFGKAWC. Residues Cys-120 and Cys-201 are joined by a disulfide bond. Residues 121-143 traverse the membrane as a helical segment; it reads EIYLALDVLFCTSSIVHLCAISL. The Cytoplasmic portion of the chain corresponds to 144 to 163; that stretch reads DRYWSITQAIEYNLKRTPRR. The helical transmembrane segment at 164 to 187 threads the bilayer; the sequence is IKAIIVTVWVISAVISFPPLISFE. Topologically, residues 188–206 are extracellular; it reads KAGGGGQQPAEPRCEINDQ. A helical transmembrane segment spans residues 207-231; that stretch reads KWYVISSSIGSFFAPCLIMILVYVR. The Cytoplasmic portion of the chain corresponds to 232-388; sequence IYQIAKRRTR…RQNREKRFTF (157 aa). Residues 240–378 are disordered; that stretch reads TRVPPSRRGP…GGAKASRWRG (139 aa). A compositionally biased stretch (low complexity) spans 251 to 268; sequence AHAAAPPGGAERRPNGLG. The segment covering 312–329 has biased composition (basic and acidic residues); sequence SSEHAERPPGARRPERGL. Ser-345 is modified (phosphoserine). A compositionally biased stretch (gly residues) spans 354-363; sequence AGSGTSGSGP. Position 367 is an omega-N-methylarginine (Arg-367). The helical transmembrane segment at 389-413 threads the bilayer; it reads VLAVVIGVFVVCWFPFFFTYTLTAV. Over 414-423 the chain is Extracellular; it reads GCSVPRTLFK. The chain crosses the membrane as a helical span at residues 424–444; the sequence is FFFWFGYCNSSLNPVIYTIFN. At 445-464 the chain is on the cytoplasmic side; that stretch reads HDFRRAFKKILCRGDRKRIV. Cys-456 is lipidated: S-palmitoyl cysteine.

This sequence belongs to the G-protein coupled receptor 1 family. Adrenergic receptor subfamily. ADRA2A sub-subfamily. As to quaternary structure, component of the ADA2A-containing complex (ATAC), composed of KAT14, KAT2A, TADA2L, TADA3L, ZZ3, MBIP, WDR5, YEATS2, CCDC101 and DR1.

It is found in the cell membrane. Functionally, alpha-2 adrenergic receptors mediate the catecholamine-induced inhibition of adenylate cyclase through the action of G proteins. Component of the ATAC complex, a complex with histone acetyltransferase activity on histones H3 and H4. This Cavia porcellus (Guinea pig) protein is Alpha-2A adrenergic receptor.